The following is a 385-amino-acid chain: dTDP-4-dehydro-2,3,6-trideoxy-D-glucose 4-aminotransferase (385 aa).

Lys-182 is subject to N6-(pyridoxal phosphate)lysine.

This sequence belongs to the DegT/DnrJ/EryC1 family. In terms of assembly, homodimer. It depends on pyridoxal 5'-phosphate as a cofactor.

The enzyme catalyses dTDP-4-amino-2,3,4,6-tetradeoxy-alpha-D-erythro-hexopyranose + 2-oxoglutarate = dTDP-4-dehydro-2,3,6-trideoxy-alpha-D-hexopyranose + L-glutamate. Its function is as follows. Involved in the biosynthesis of forosamine ((4-dimethylamino)-2,3,4,6-tetradeoxy-alpha-D-threo-hexopyranose), a highly deoxygenated sugar component of several bioactive natural products such as the insecticidal spinosyns A and D. In the presence of pyridoxal 5'-phosphate (PLP) and alpha-ketoglutarate, catalyzes the C-4 transamination of dTDP-4-keto-2,3,6-trideoxy-alpha-D-glucose to yield dTDP-4-amino-2,3,4,6-tetradeoxy-alpha-D-glucose. It can also use pyruvate, but less efficiently than alpha-ketoglutarate. Also able to catalyze the C-4 transamination of dTDP-4-keto-2,6-dideoxy-alpha-D-glucose to yield dTDP-4-amino-2,4,6-trideoxy-D-glucose. The sequence is that of dTDP-4-dehydro-2,3,6-trideoxy-D-glucose 4-aminotransferase from Saccharopolyspora spinosa.